The sequence spans 391 residues: Probable FAD-dependent oxidoreductase PA4991 (391 aa).

FAD contacts are provided by residues Ala-17, Glu-36, 44–45 (QS), 49–51 (QGI), and 346–347 (LA).

This sequence belongs to the DAO family. Monomer. FAD is required as a cofactor.

Functionally, probably functions as a FAD-dependent oxidoreductase, whose physiological substrate is unknown. Does not display amino-acid oxidase or glycerol-3-phosphate dehydrogenase activities. Is essential for growth of P.aeruginosa in the sputum of cystic fibrosis patients. This is Probable FAD-dependent oxidoreductase PA4991 from Pseudomonas aeruginosa (strain ATCC 15692 / DSM 22644 / CIP 104116 / JCM 14847 / LMG 12228 / 1C / PRS 101 / PAO1).